The primary structure comprises 641 residues: MLEQIRGPADLQHLSTHQLRELAAEIREFLIHKVAATGGHLGPNLGVVELTLALHRVFDSPHDPIIFDTGHQAYVHKMLTGRAHEFESLRKKGGLSGYPSRSESEHDWVESSHASAALSYADGLAKAFELSGHRNRHVVAVVGDGALTGGMCWEALNNIAASGRPVIIVVNDNGRSYAPTIGGVADHLATLRLQPAYEQALQRGRDALRALPLVGKFAYRVMHSVKAGIKDSLSPQLLFTDLGLKYVGPVDGHDERAVEAALRHARGFGRPVIVHVVTRKGMGYAPAEDDEADQMHSCGVIDPVTGQATKVAGPGWTATFSDALIGYARKRRDIVAITAAMPGPTGLTPFGQQFPDRLFDVGIAEQHAMTSAAGLAMGGMHPVVAIYSTFLNRAFDQIMMDVALHRLPVTMVLDRAGITGSDGASHNGMWDLSILGVVPGMRVAAPRDAARLREELGEALDVDDGPTALRFPKGDVGEDIPAIERRGSGLSGVDVLALPASGCNHDVLLIGVGAFAPMALAVARRLADQGIGVTVVDPRWVLPVSDSILELAARHKLVVTCEDNGVNGGVGSAVSAALRRAELDVPCRDVGLPQRFYEHASRGELLADLALTDQDIARRITGWVAALGSGVAEAEIREHLD.

Residues histidine 71 and 112-114 (SHA) contribute to the thiamine diphosphate site. Aspartate 144 is a binding site for Mg(2+). Residues 145–146 (GA), asparagine 173, tyrosine 284, and glutamate 365 contribute to the thiamine diphosphate site. Asparagine 173 contributes to the Mg(2+) binding site.

Belongs to the transketolase family. DXPS subfamily. In terms of assembly, homodimer. Mg(2+) serves as cofactor. Requires thiamine diphosphate as cofactor.

The catalysed reaction is D-glyceraldehyde 3-phosphate + pyruvate + H(+) = 1-deoxy-D-xylulose 5-phosphate + CO2. It participates in metabolic intermediate biosynthesis; 1-deoxy-D-xylulose 5-phosphate biosynthesis; 1-deoxy-D-xylulose 5-phosphate from D-glyceraldehyde 3-phosphate and pyruvate: step 1/1. Functionally, catalyzes the acyloin condensation reaction between C atoms 2 and 3 of pyruvate and glyceraldehyde 3-phosphate to yield 1-deoxy-D-xylulose-5-phosphate (DXP). The chain is 1-deoxy-D-xylulose-5-phosphate synthase from Mycolicibacterium paratuberculosis (strain ATCC BAA-968 / K-10) (Mycobacterium paratuberculosis).